The sequence spans 2207 residues: Mediator of RNA polymerase II transcription subunit 13-like (2207 aa).

Positions V337 to H355 are enriched in polar residues. Disordered stretches follow at residues V337–H368, A384–S403, V431–L479, and K519–N574. Residues S356–H368 show a composition bias toward basic residues. A compositionally biased stretch (polar residues) spans A384–P394. The span at P442–S453 shows a compositional bias: low complexity. The segment covering K463 to Q475 has biased composition (basic and acidic residues). Residues S528–P539 show a composition bias toward polar residues. Residues P546–S555 show a composition bias toward pro residues. S548 and S555 each carry phosphoserine. The LXXLL motif 1 motif lies at L664–L668. Basic and acidic residues predominate over residues G731 to G747. The disordered stretch occupies residues G731–M767. Phosphoserine is present on residues S812 and S821. The interval E816–G847 is disordered. Basic and acidic residues predominate over residues T834–R844. Phosphoserine is present on S918. Positions D1004–E1091 are disordered. Residues N1009–L1019 are compositionally biased toward polar residues. The segment covering N1020–G1031 has biased composition (low complexity). The segment covering T1072–L1087 has biased composition (polar residues). An LXXLL motif 2 motif is present at residues L1224–L1228. The tract at residues L1379–L1400 is leucine-zipper. 2 disordered regions span residues L1523–E1652 and G2042–R2077. Residues P1541–G1593 show a composition bias toward low complexity. Composition is skewed to polar residues over residues Q1612 to T1624 and P1635 to S1649. Residue S2080 is modified to Phosphoserine.

The protein belongs to the Mediator complex subunit 13 family. In terms of assembly, component of the Mediator complex, which is composed of MED1, MED4, MED6, MED7, MED8, MED9, MED10, MED11, MED12, MED13, MED13L, MED14, MED15, MED16, MED17, MED18, MED19, MED20, MED21, MED22, MED23, MED24, MED25, MED26, MED27, MED29, MED30, MED31, CCNC, CDK8 and CDC2L6/CDK11. The MED12, MED13, CCNC and CDK8 subunits form a distinct module termed the CDK8 module. Mediator containing the CDK8 module is less active than Mediator lacking this module in supporting transcriptional activation. Individual preparations of the Mediator complex lacking one or more distinct subunits have been variously termed ARC, CRSP, DRIP, PC2, SMCC and TRAP. In terms of tissue distribution, highly expressed in heart and weakly expressed in brain, spleen, lung, liver, kidney and testis.

It localises to the nucleus. In terms of biological role, component of the Mediator complex, a coactivator involved in the regulated transcription of nearly all RNA polymerase II-dependent genes. Mediator functions as a bridge to convey information from gene-specific regulatory proteins to the basal RNA polymerase II transcription machinery. Mediator is recruited to promoters by direct interactions with regulatory proteins and serves as a scaffold for the assembly of a functional preinitiation complex with RNA polymerase II and the general transcription factors. This subunit may specifically regulate transcription of targets of the Wnt signaling pathway and SHH signaling pathway. The sequence is that of Mediator of RNA polymerase II transcription subunit 13-like (Med13l) from Mus musculus (Mouse).